A 58-amino-acid polypeptide reads, in one-letter code: MAVPARKTSKTRKRNRRGHIKLTVPGLAPCPQCGELRKSHMVCPSCGYYDGKQVVENN.

The protein belongs to the bacterial ribosomal protein bL32 family.

The chain is Large ribosomal subunit protein bL32 from Limosilactobacillus fermentum (strain NBRC 3956 / LMG 18251) (Lactobacillus fermentum).